The primary structure comprises 607 residues: MEGGGEALFLDGVGEVTVAVGDDGLSFQPLHQEVSSSCWSSIIMQPKLESKLKFSDVYAVELLEVGPVCEPWNARATVQGKINTEMNRFVIHTVTRPRKRPSPWVPCEYIFGHKDQQTCKTWVEHIKTCINKEQDRPKSLMVFVHPLCGKGRGCKNWETVAPLFERAKVKTKVIVTQRAGHAYDTLASLSDKDLKKFDGVIAVGGDGLFNEILNGLLSTRHTNSYPPTPEGFGYFRNNMKCQEHRNNDLSNSELTGDDANAISGSSNTPDDHEPLLSTTRSTGLDISSSDSSDEPCNGDQVPLVSFPNNWFRLGIIPSGSTDAIVLSTTGERDPVTSALLIILGRRISLDIAQVVRWKSSPSAEVSPTVRYAASFAGYGFYGEVIRESEKYRWMGPARYDFSGTMVFLKHRSYEAKVAFLENGNTHSLTASAENNANGVQTLQYHQNRHRKTICRTNCLICKGTSTSEQNSEDENPDSSRTACETPKWVWSKGRFLSVGAAVISCRNERAPDGLVADAHLSDGFLHLLLIRDCPLPFYLWHLTQFTKKGSDPLSFKFVEHHKTQAFTFISSHDESVWNLDGELLQACEVSVQAFRGLVNLFASGPEV.

Residues 135–358 (DRPKSLMVFV…LDIAQVVRWK (224 aa)) form the DAGKc domain. Residues 145-149 (HPLCG), threonine 176, and 205-211 (GDGLFNE) each bind ATP. 204 to 207 (GGDG) provides a ligand contact to substrate. The active-site Proton donor/acceptor is the aspartate 206. The disordered stretch occupies residues 247–297 (NDLSNSELTGDDANAISGSSNTPDDHEPLLSTTRSTGLDISSSDSSDEPCN). The span at 276–286 (LSTTRSTGLDI) shows a compositional bias: polar residues. Serine 320 is a binding site for ATP. The short motif at 454–461 (CRTNCLIC) is the CXXXCXXC element.

Ca(2+) is required as a cofactor. Requires Mg(2+) as cofactor. As to expression, highly expressed in leaves and at lower levels in stems.

It catalyses the reaction an N-acylsphing-4-enine + ATP = an N-acylsphing-4-enine 1-phosphate + ADP + H(+). In terms of biological role, catalyzes specifically the phosphorylation of ceramide to form ceramide 1-phosphate. Possesses activity on ceramide analog (C6 synthetic ceramide) in vitro. Ceramide is a critical sphingolipid metabolite that induces programmed cell death (PCD) in plants and ceramide-1-phosphate has a PCD suppressive effect. Thus, ceramide phosphorylation plays a role in the modulation of PCD and CERK activity is crucial for the maintenance of cell viability. The chain is Ceramide kinase (CERK) from Oryza sativa subsp. japonica (Rice).